The chain runs to 384 residues: BarH-like 2 homeobox protein (384 aa).

Disordered regions lie at residues 1–134 (MTAM…APRT), 154–235 (CAPY…ARTA), and 364–384 (PGGQ…PHPR). 2 stretches are compositionally biased toward low complexity: residues 101–110 (VPAQSLQPSP) and 119–134 (QSAA…APRT). A compositionally biased stretch (polar residues) spans 157-175 (YSTSVSSPHHTPKQESNAA). Basic and acidic residues predominate over residues 177–217 (ESFRPKLEQEDGKTKLDKREDPQSDIKCHGTKEEGDREITS). The segment at residues 229–288 (PRKARTAFSDHQLNQLERSFERQKYLSVQDRMDLAAALNLTDTQVKTWYQNRRTKWKRQT) is a DNA-binding region (homeobox).

It belongs to the BAR homeobox family.

It localises to the nucleus. Potential regulator of neural basic helix-loop-helix genes. It may down-regulate expression of ASCL1 and, within the thalamus, up-regulate NGN2, thereby regulating distinct patterns of neuronal differentiation. The chain is BarH-like 2 homeobox protein (Barhl2) from Mus musculus (Mouse).